A 515-amino-acid polypeptide reads, in one-letter code: Cytidine and dCMP deaminase domain-containing protein 1 (515 aa).

Composition is skewed to polar residues over residues 1–11 and 18–27; these read MKEAGQMQNLE and SVSTQTGSMT. Disordered regions lie at residues 1 to 27 and 56 to 83; these read MKEA…GSMT and RQKS…STDK. Basic and acidic residues predominate over residues 60–83; that stretch reads QKNEEGKHGPLGDNEEMTRVSTDK. Residues 71 to 169 enclose the CMP/dCMP-type deaminase 1 domain; sequence GDNEEMTRVS…SLLTEASSSE (99 aa). Histidine 110, cysteine 135, and cysteine 138 together coordinate Zn(2+). The Nuclear export signal motif lies at 272 to 284; the sequence is NLRQNMKDLILLL. The CMP/dCMP-type deaminase 2 domain maps to 318 to 483; the sequence is EIARHCMVQA…LNPSEAYGLE (166 aa). Histidine 399 serves as a coordination point for Zn(2+). Catalysis depends on glutamate 401, which acts as the Proton donor. 2 residues coordinate Zn(2+): cysteine 427 and cysteine 430. The disordered stretch occupies residues 481 to 515; it reads GLEQNEPERRENGVLRPVPQKEEQHQDKKLRLGIH. Over residues 486 to 515 the composition is skewed to basic and acidic residues; it reads EPERRENGVLRPVPQKEEQHQDKKLRLGIH. Residues 489-511 carry the Bipartite nuclear localization signal motif; the sequence is RRENGVLRPVPQKEEQHQDKKLR.

The protein belongs to the cytidine and deoxycytidylate deaminase family. Zn(2+) serves as cofactor.

The protein resides in the cytoplasm. It localises to the nucleus. It catalyses the reaction 2'-deoxycytidine + H2O + H(+) = 2'-deoxyuridine + NH4(+). It carries out the reaction cytidine + H2O + H(+) = uridine + NH4(+). Its function is as follows. Catalyzes the deamination of cytidine and deoxycytidine into uridine and deoxyuridine, respectively. May play an important role in testicular development and spermatogenesis. The protein is Cytidine and dCMP deaminase domain-containing protein 1 (CDADC1) of Macaca fascicularis (Crab-eating macaque).